The sequence spans 629 residues: MTTKLKNASNLSESAQVDQQSVQPFTRSQKVYVQGSRPDIRVPMREITLDVTPTDFGGEINAPVTVYDTSGPYTDPNVVIDVRKGLGDVRSAWIEDRGDTERLAGLSSNFGQQRLADPELTKLRFAHVNNPRRAKAGANVSQMHYARKGIITAEMEYVAIRENMKLQEARAAGLLKQQHAGHSFGASIPKEITPEFVREEIARGRAIIPANINHVELEPMIIGRNFLVKINGNIGNSALGSSIEEEVAKLTWGIRWGSDTVMDLSTGKHIHETREWIIRNSPVPIGTVPIYQALEKVNGVAEDLTWELFRDTLIEQAEQGVDYFTIHAGVLLRYVPLTAKRVTGIVSRGGSIMAKWCLAHHKENFLYTHFDEICEIMKAYDVSFSLGDGLRPGSIADANDEAQFGELETLGELTKIAWKHDVQCMIEGPGHVPMQLIKENMDKQLECCDEAPFYTLGPLTTDIAPGYDHITSGIGAAMIGWFGCAMLCYVTPKEHLGLPNKDDVKTGIITYKIAAHAADLAKGHPGAQIRDNALSKARFEFRWEDQFNLGLDPDTARSYHDETLPKDSAKVAHFCSMCGPKFCSMKITQEVREYAANQRIEAVDVDVAKGLAEQAERFKQEGSQLYKKV.

The tract at residues 1 to 30 (MTTKLKNASNLSESAQVDQQSVQPFTRSQK) is disordered. Substrate-binding positions include asparagine 233, methionine 262, tyrosine 291, histidine 327, 347–349 (SRG), 388–391 (DGLR), and glutamate 427. Zn(2+) is bound at residue histidine 431. Tyrosine 454 provides a ligand contact to substrate. Histidine 495 contacts Zn(2+). Residues cysteine 575, cysteine 578, and cysteine 583 each contribute to the [4Fe-4S] cluster site.

Belongs to the ThiC family. As to quaternary structure, homodimer. [4Fe-4S] cluster serves as cofactor.

It carries out the reaction 5-amino-1-(5-phospho-beta-D-ribosyl)imidazole + S-adenosyl-L-methionine = 4-amino-2-methyl-5-(phosphooxymethyl)pyrimidine + CO + 5'-deoxyadenosine + formate + L-methionine + 3 H(+). It participates in cofactor biosynthesis; thiamine diphosphate biosynthesis. Functionally, catalyzes the synthesis of the hydroxymethylpyrimidine phosphate (HMP-P) moiety of thiamine from aminoimidazole ribotide (AIR) in a radical S-adenosyl-L-methionine (SAM)-dependent reaction. This Pseudomonas fluorescens (strain ATCC BAA-477 / NRRL B-23932 / Pf-5) protein is Phosphomethylpyrimidine synthase.